The following is a 114-amino-acid chain: Hemerythrin subunit 1 (114 aa).

Fe cation contacts are provided by H26, H55, E59, H74, H78, H102, and D107.

It belongs to the hemerythrin family.

Hemerythrin is a respiratory protein in blood cells of certain marine worms. The oxygen-binding site in each chain contains two iron atoms. This chain is Hemerythrin subunit 1, found in Golfingia vulgaris (Marine worm).